A 100-amino-acid polypeptide reads, in one-letter code: HssA/B-like protein 37 (100 aa).

Disordered stretches follow at residues 1–29 (MTLF…SGTS) and 67–100 (RSRG…CCGI). Residues 71-93 (SCGGNRGNGNGNGGMGGGNGSCC) show a composition bias toward gly residues.

This sequence belongs to the hssA/B family.

This is HssA/B-like protein 37 (hssl37) from Dictyostelium discoideum (Social amoeba).